Reading from the N-terminus, the 203-residue chain is Transcriptional regulator GfcR (203 aa).

Belongs to the purine/pyrimidine phosphoribosyltransferase family. GfcR subfamily.

This chain is Transcriptional regulator GfcR, found in Methanothrix thermoacetophila (strain DSM 6194 / JCM 14653 / NBRC 101360 / PT) (Methanosaeta thermophila).